The following is a 318-amino-acid chain: Methionyl-tRNA formyltransferase (318 aa).

Residue 112-115 (SILP) coordinates (6S)-5,6,7,8-tetrahydrofolate.

The protein belongs to the Fmt family.

It carries out the reaction L-methionyl-tRNA(fMet) + (6R)-10-formyltetrahydrofolate = N-formyl-L-methionyl-tRNA(fMet) + (6S)-5,6,7,8-tetrahydrofolate + H(+). Attaches a formyl group to the free amino group of methionyl-tRNA(fMet). The formyl group appears to play a dual role in the initiator identity of N-formylmethionyl-tRNA by promoting its recognition by IF2 and preventing the misappropriation of this tRNA by the elongation apparatus. In Shewanella baltica (strain OS223), this protein is Methionyl-tRNA formyltransferase.